The chain runs to 96 residues: Small ribosomal subunit protein bS6 (96 aa).

This sequence belongs to the bacterial ribosomal protein bS6 family.

Functionally, binds together with bS18 to 16S ribosomal RNA. The protein is Small ribosomal subunit protein bS6 of Streptococcus equi subsp. zooepidemicus (strain MGCS10565).